The following is a 234-amino-acid chain: LexA repressor (234 aa).

Positions Phe26–Thr46 form a DNA-binding region, H-T-H motif. Active-site for autocatalytic cleavage activity residues include Ser155 and Lys193.

This sequence belongs to the peptidase S24 family. Homodimer.

The enzyme catalyses Hydrolysis of Ala-|-Gly bond in repressor LexA.. In terms of biological role, represses a number of genes involved in the response to DNA damage (SOS response), including recA and lexA. In the presence of single-stranded DNA, RecA interacts with LexA causing an autocatalytic cleavage which disrupts the DNA-binding part of LexA, leading to derepression of the SOS regulon and eventually DNA repair. The chain is LexA repressor from Bartonella henselae (strain ATCC 49882 / DSM 28221 / CCUG 30454 / Houston 1) (Rochalimaea henselae).